The sequence spans 487 residues: Argininosuccinate lyase (487 aa).

This sequence belongs to the lyase 1 family. Argininosuccinate lyase subfamily.

It is found in the cytoplasm. It carries out the reaction 2-(N(omega)-L-arginino)succinate = fumarate + L-arginine. The protein operates within amino-acid biosynthesis; L-arginine biosynthesis; L-arginine from L-ornithine and carbamoyl phosphate: step 3/3. This is Argininosuccinate lyase from Methanococcus aeolicus (strain ATCC BAA-1280 / DSM 17508 / OCM 812 / Nankai-3).